Reading from the N-terminus, the 502-residue chain is Protein ANKUB1 (502 aa).

The protein is Protein ANKUB1 (ANKUB1) of Homo sapiens (Human).